The following is a 206-amino-acid chain: Elongation factor Ts (206 aa).

The interval 81-84 (TDFV) is involved in Mg(2+) ion dislocation from EF-Tu.

Belongs to the EF-Ts family.

Its subcellular location is the cytoplasm. Its function is as follows. Associates with the EF-Tu.GDP complex and induces the exchange of GDP to GTP. It remains bound to the aminoacyl-tRNA.EF-Tu.GTP complex up to the GTP hydrolysis stage on the ribosome. The sequence is that of Elongation factor Ts from Maridesulfovibrio salexigens (strain ATCC 14822 / DSM 2638 / NCIMB 8403 / VKM B-1763) (Desulfovibrio salexigens).